An 892-amino-acid polypeptide reads, in one-letter code: DNA mismatch repair protein MutS (892 aa).

607 to 614 (GPNMSGKS) is an ATP binding site. A disordered region spans residues 826-854 (ETKAETEEESQLSFFGGEQSSKKQDKPVL). Residues 845 to 854 (SSKKQDKPVL) show a composition bias toward basic and acidic residues.

It belongs to the DNA mismatch repair MutS family.

This protein is involved in the repair of mismatches in DNA. It is possible that it carries out the mismatch recognition step. This protein has a weak ATPase activity. This Bacillus cereus (strain AH187) protein is DNA mismatch repair protein MutS.